The primary structure comprises 191 residues: Probable nicotinate-nucleotide adenylyltransferase (191 aa).

It belongs to the NadD family.

The catalysed reaction is nicotinate beta-D-ribonucleotide + ATP + H(+) = deamido-NAD(+) + diphosphate. It functions in the pathway cofactor biosynthesis; NAD(+) biosynthesis; deamido-NAD(+) from nicotinate D-ribonucleotide: step 1/1. In terms of biological role, catalyzes the reversible adenylation of nicotinate mononucleotide (NaMN) to nicotinic acid adenine dinucleotide (NaAD). This Staphylococcus epidermidis (strain ATCC 12228 / FDA PCI 1200) protein is Probable nicotinate-nucleotide adenylyltransferase.